The chain runs to 170 residues: Large ribosomal subunit protein uL10 (170 aa).

Belongs to the universal ribosomal protein uL10 family. In terms of assembly, part of the ribosomal stalk of the 50S ribosomal subunit. The N-terminus interacts with L11 and the large rRNA to form the base of the stalk. The C-terminus forms an elongated spine to which L12 dimers bind in a sequential fashion forming a multimeric L10(L12)X complex.

Its function is as follows. Forms part of the ribosomal stalk, playing a central role in the interaction of the ribosome with GTP-bound translation factors. This chain is Large ribosomal subunit protein uL10, found in Fusobacterium nucleatum subsp. nucleatum (strain ATCC 25586 / DSM 15643 / BCRC 10681 / CIP 101130 / JCM 8532 / KCTC 2640 / LMG 13131 / VPI 4355).